We begin with the raw amino-acid sequence, 30 residues long: Kalata-B16 (30 aa).

Residues glycine 1 to aspartate 30 constitute a cross-link (cyclopeptide (Gly-Asp)). Disulfide bonds link cysteine 4–cysteine 21, cysteine 8–cysteine 23, and cysteine 13–cysteine 28.

In terms of processing, this is a cyclic peptide.

Probably participates in a plant defense mechanism. This chain is Kalata-B16, found in Oldenlandia affinis.